The sequence spans 302 residues: 4-hydroxy-tetrahydrodipicolinate synthase (302 aa).

Thr57 contacts pyruvate. The active-site Proton donor/acceptor is the Tyr145. The active-site Schiff-base intermediate with substrate is the Lys173. Ile213 is a binding site for pyruvate.

Belongs to the DapA family. As to quaternary structure, homotetramer; dimer of dimers.

The protein localises to the cytoplasm. The enzyme catalyses L-aspartate 4-semialdehyde + pyruvate = (2S,4S)-4-hydroxy-2,3,4,5-tetrahydrodipicolinate + H2O + H(+). Its pathway is amino-acid biosynthesis; L-lysine biosynthesis via DAP pathway; (S)-tetrahydrodipicolinate from L-aspartate: step 3/4. Catalyzes the condensation of (S)-aspartate-beta-semialdehyde [(S)-ASA] and pyruvate to 4-hydroxy-tetrahydrodipicolinate (HTPA). This Mycolicibacterium gilvum (strain PYR-GCK) (Mycobacterium gilvum (strain PYR-GCK)) protein is 4-hydroxy-tetrahydrodipicolinate synthase.